Consider the following 227-residue polypeptide: Lipoprotein-releasing system ATP-binding protein LolD (227 aa).

One can recognise an ABC transporter domain in the interval 8-226 (IEVTNLCKSF…VVHMADGRIT (219 aa)). Residue 44–51 (GASGAGKT) participates in ATP binding.

The protein belongs to the ABC transporter superfamily. Lipoprotein translocase (TC 3.A.1.125) family. The complex is composed of two ATP-binding proteins (LolD) and two transmembrane proteins (LolC and LolE).

The protein resides in the cell inner membrane. Its function is as follows. Part of the ABC transporter complex LolCDE involved in the translocation of mature outer membrane-directed lipoproteins, from the inner membrane to the periplasmic chaperone, LolA. Responsible for the formation of the LolA-lipoprotein complex in an ATP-dependent manner. The sequence is that of Lipoprotein-releasing system ATP-binding protein LolD from Syntrophotalea carbinolica (strain DSM 2380 / NBRC 103641 / GraBd1) (Pelobacter carbinolicus).